A 677-amino-acid polypeptide reads, in one-letter code: DNA ligase (677 aa).

NAD(+) contacts are provided by residues 32–36 (DSEYD), 81–82 (SL), and Glu-112. The active-site N6-AMP-lysine intermediate is Lys-114. NAD(+) contacts are provided by Arg-135, Glu-171, Lys-288, and Lys-312. Zn(2+) contacts are provided by Cys-416, Cys-419, Cys-434, and Cys-439. The BRCT domain maps to 598–677 (YKPLPLSGVE…QEFINMLEQS (80 aa)).

This sequence belongs to the NAD-dependent DNA ligase family. LigA subfamily. The cofactor is Mg(2+). Mn(2+) is required as a cofactor.

It catalyses the reaction NAD(+) + (deoxyribonucleotide)n-3'-hydroxyl + 5'-phospho-(deoxyribonucleotide)m = (deoxyribonucleotide)n+m + AMP + beta-nicotinamide D-nucleotide.. In terms of biological role, DNA ligase that catalyzes the formation of phosphodiester linkages between 5'-phosphoryl and 3'-hydroxyl groups in double-stranded DNA using NAD as a coenzyme and as the energy source for the reaction. It is essential for DNA replication and repair of damaged DNA. This Dehalococcoides mccartyi (strain ATCC BAA-2266 / KCTC 15142 / 195) (Dehalococcoides ethenogenes (strain 195)) protein is DNA ligase.